The following is a 172-amino-acid chain: Large ribosomal subunit protein bL17m (172 aa).

Residues 1-8 (MRLSFAAA) constitute a mitochondrion transit peptide.

The protein belongs to the bacterial ribosomal protein bL17 family. In terms of assembly, component of the mitochondrial ribosome large subunit (39S) which comprises a 16S rRNA and about 50 distinct proteins.

The protein resides in the mitochondrion. In Bos taurus (Bovine), this protein is Large ribosomal subunit protein bL17m (MRPL17).